The sequence spans 653 residues: Epithelial sodium channel subunit gamma (653 aa).

Residues 1 to 54 (MGHGRRISESIKKQLPVTGPEAPTVKNLMDWYLNNTNTHGCRRIAVSRGYLRRW) are Cytoplasmic-facing. The helical transmembrane segment at 55–75 (IWICFTVSSVGMIFWQWTLLL) threads the bilayer. Residues 76 to 546 (MSYYTVSVSV…GGQLGLWMSC (471 aa)) lie on the Extracellular side of the membrane. 8 cysteine pairs are disulfide-bonded: cysteine 100-cysteine 290, cysteine 214-cysteine 221, cysteine 267-cysteine 274, cysteine 379-cysteine 464, cysteine 401-cysteine 460, cysteine 405-cysteine 456, cysteine 414-cysteine 441, and cysteine 416-cysteine 430. Residues 547-567 (SIVCFLEMWEVFLVDILTIIA) traverse the membrane as a helical segment. Topologically, residues 568 to 653 (RYWLHRGRQW…DEQVSDTEVN (86 aa)) are cytoplasmic. The disordered stretch occupies residues 582-608 (KERQMQQPSPPDHDTGHHNPVCIDDED).

Belongs to the amiloride-sensitive sodium channel (TC 1.A.6) family. SCNN1G subfamily. In terms of assembly, component of the heterotrimeric epithelial sodium channel (ENaC) composed of an alpha/SCNN1A, a beta/SCNN1B and a gamma/SCNN1G subunit. Strongly expressed in gill, liver, kidney and rectum and more weakly in heart, muscle and intestine.

It is found in the apical cell membrane. The enzyme catalyses Na(+)(in) = Na(+)(out). Originally identified and characterized by its inhibition by the diuretic drug amiloride. This is one of the three pore-forming subunits of the heterotrimeric epithelial sodium channel (ENaC), a critical regulator of sodium balance and fluid homeostasis. ENaC operates in epithelial tissues, where it mediates the electrodiffusion of sodium ions from extracellular fluid through the apical membrane of cells, with water following osmotically. The protein is Epithelial sodium channel subunit gamma of Neoceratodus forsteri (Australian lungfish).